Here is a 547-residue protein sequence, read N- to C-terminus: Varicidin biosynthesis cluster MFS-type transporer (547 aa).

Residues M1–D17 are compositionally biased toward polar residues. The segment at M1–E33 is disordered. 11 helical membrane passes run L47–S67, L156–T176, W183–V203, A224–G244, S252–V272, I296–W316, I330–V350, G360–N382, A392–A412, I422–A442, and C503–W523.

The protein belongs to the major facilitator superfamily. TCR/Tet family.

It localises to the cell membrane. In terms of biological role, MFS-type transporer; part of the gene cluster that mediates the biosynthesis of varicidin A, an antifungal natural product containing a cis-octahydrodecalin core. This chain is Varicidin biosynthesis cluster MFS-type transporer, found in Talaromyces variabilis (Penicillium variabile).